The following is a 249-amino-acid chain: Tetraspanin-7 (249 aa).

Over 1-16 the chain is Cytoplasmic; the sequence is MASRRMETKPVITCLK. The chain crosses the membrane as a helical span at residues 17–40; the sequence is TLLIIYSFVFWITGVILLAVGVWG. Over 41-56 the chain is Extracellular; the sequence is KLTLGTYISLIAENST. N-linked (GlcNAc...) asparagine glycosylation is present at asparagine 54. A helical transmembrane segment spans residues 57 to 75; the sequence is NAPYVLIGTGTTIVVFGLF. Residues 76 to 86 are Cytoplasmic-facing; that stretch reads GCFATCRGSPW. The chain crosses the membrane as a helical span at residues 87–112; it reads MLKLYAMFLSLVFLAELVAGISGFVF. Residues 113–213 lie on the Extracellular side of the membrane; it reads RHEIKDTFLR…LVTSFMETNM (101 aa). Asparagine 155, asparagine 158, asparagine 177, and asparagine 188 each carry an N-linked (GlcNAc...) asparagine glycan. Residues 214–234 form a helical membrane-spanning segment; sequence GIIAGVAFGIAFSQLIGMLLA. Residues 235–249 lie on the Cytoplasmic side of the membrane; the sequence is CCLSRFITANQYEMV.

Belongs to the tetraspanin (TM4SF) family.

The protein resides in the membrane. May be involved in cell proliferation and cell motility. The chain is Tetraspanin-7 (Tspan7) from Mus musculus (Mouse).